The primary structure comprises 283 residues: tRNA pseudouridine synthase B (283 aa).

The active-site Nucleophile is Asp-38.

This sequence belongs to the pseudouridine synthase TruB family. Type 1 subfamily.

The catalysed reaction is uridine(55) in tRNA = pseudouridine(55) in tRNA. Its function is as follows. Responsible for synthesis of pseudouridine from uracil-55 in the psi GC loop of transfer RNAs. This is tRNA pseudouridine synthase B from Onion yellows phytoplasma (strain OY-M).